Here is a 313-residue protein sequence, read N- to C-terminus: E3 ubiquitin-protein ligase SINA-like 2 (313 aa).

Residues 1-26 (MSGEASTSRRKRQRVPSSVESVENGG) form a disordered region. An RING-type zinc finger spans residues 44–80 (CPICCHALTSPIFQCDNGHIACSSCCTKLRNKCPSCA). Residues 94 to 277 (VVEAVMVTCP…LKMEICIRKL (184 aa)) form an SBD region. The SIAH-type zinc-finger motif lies at 97 to 155 (AVMVTCPNVKHGCTEKFSYGKELIHEKDCRFALCYCPAPNCNYSGVYKDLYSHFYVNHY). Zn(2+) is bound by residues Cys102, Cys109, His121, Cys125, Cys132, Cys137, His149, and His154. The disordered stretch occupies residues 278-313 (KKDEEEADEDEESEEEEDDDDDDDDDDEEEDADEEE). The span at 282–313 (EEADEDEESEEEEDDDDDDDDDDEEEDADEEE) shows a compositional bias: acidic residues.

It belongs to the SINA (Seven in absentia) family.

It carries out the reaction S-ubiquitinyl-[E2 ubiquitin-conjugating enzyme]-L-cysteine + [acceptor protein]-L-lysine = [E2 ubiquitin-conjugating enzyme]-L-cysteine + N(6)-ubiquitinyl-[acceptor protein]-L-lysine.. The protein operates within protein modification; protein ubiquitination. Its function is as follows. E3 ubiquitin-protein ligase that mediates ubiquitination and subsequent proteasomal degradation of target proteins. E3 ubiquitin ligases accept ubiquitin from an E2 ubiquitin-conjugating enzyme in the form of a thioester and then directly transfers the ubiquitin to targeted substrates. It probably triggers the ubiquitin-mediated degradation of different substrates. This is E3 ubiquitin-protein ligase SINA-like 2 from Arabidopsis thaliana (Mouse-ear cress).